Reading from the N-terminus, the 355-residue chain is Anhydro-N-acetylmuramic acid kinase (355 aa).

G9–D16 is an ATP binding site.

It belongs to the anhydro-N-acetylmuramic acid kinase family.

It carries out the reaction 1,6-anhydro-N-acetyl-beta-muramate + ATP + H2O = N-acetyl-D-muramate 6-phosphate + ADP + H(+). It participates in amino-sugar metabolism; 1,6-anhydro-N-acetylmuramate degradation. Its pathway is cell wall biogenesis; peptidoglycan recycling. Functionally, catalyzes the specific phosphorylation of 1,6-anhydro-N-acetylmuramic acid (anhMurNAc) with the simultaneous cleavage of the 1,6-anhydro ring, generating MurNAc-6-P. Is required for the utilization of anhMurNAc either imported from the medium or derived from its own cell wall murein, and thus plays a role in cell wall recycling. This chain is Anhydro-N-acetylmuramic acid kinase, found in Paramagnetospirillum magneticum (strain ATCC 700264 / AMB-1) (Magnetospirillum magneticum).